The following is a 95-amino-acid chain: Putative monooxygenase YcnE (95 aa).

Residues 2-93 enclose the ABM domain; sequence IVLQAYIKVK…APLDVVRTEL (92 aa). Residue S24 is modified to Phosphoserine.

The protein belongs to the LsrG family.

Functionally, putative monooxygenase that may contribute to the degradation of aromatic compounds. This chain is Putative monooxygenase YcnE (ycnE), found in Bacillus subtilis (strain 168).